A 256-amino-acid polypeptide reads, in one-letter code: 5-keto-4-deoxy-D-glucarate aldolase (256 aa).

H50 functions as the Proton acceptor in the catalytic mechanism. Q151 serves as a coordination point for substrate. Position 153 (E153) interacts with Mg(2+). Substrate-binding residues include S178 and D179. D179 lines the Mg(2+) pocket.

It belongs to the HpcH/HpaI aldolase family. KDGluc aldolase subfamily. Homohexamer; trimer of dimers. It depends on Mg(2+) as a cofactor.

The enzyme catalyses 5-dehydro-4-deoxy-D-glucarate = 2-hydroxy-3-oxopropanoate + pyruvate. The catalysed reaction is 2-dehydro-3-deoxy-D-glucarate = 2-hydroxy-3-oxopropanoate + pyruvate. It functions in the pathway carbohydrate acid metabolism; galactarate degradation; D-glycerate from galactarate: step 2/3. Catalyzes the reversible retro-aldol cleavage of both 5-keto-4-deoxy-D-glucarate and 2-keto-3-deoxy-D-glucarate to pyruvate and tartronic semialdehyde. This is 5-keto-4-deoxy-D-glucarate aldolase from Shigella sonnei (strain Ss046).